The chain runs to 57 residues: Large ribosomal subunit protein bL33 (57 aa).

The protein belongs to the bacterial ribosomal protein bL33 family.

The sequence is that of Large ribosomal subunit protein bL33 from Shewanella sp. (strain MR-4).